A 337-amino-acid chain; its full sequence is Neurogenic differentiation factor 6 (337 aa).

Positions 28–80 are disordered; it reads QKQIKKPESFPKQVVLRGKSIKRAPGEETEKEEEEEDREEEDENGLSRRRGLR. Acidic residues predominate over residues 54–71; that stretch reads EETEKEEEEEDREEEDEN. Positions 80–86 match the Nuclear localization signal motif; sequence RKKKTTK. One can recognise a bHLH domain in the interval 94–146; it reads FRRQEANARERNRMHGLNDALDNLRKVVPCYSKTQKLSKIETLRLAKNYIWAL.

As to quaternary structure, efficient DNA binding requires dimerization with another bHLH protein. Specific to the nervous system of both embryos and adults. Highest levels in the cortical plate of the cerebrum.

It localises to the nucleus. Its function is as follows. Activates E box-dependent transcription in collaboration with TCF3/E47. May be a trans-acting factor involved in the development and maintenance of the mammalian nervous system. Transactivates the promoter of its own gene. In Mus musculus (Mouse), this protein is Neurogenic differentiation factor 6 (Neurod6).